An 855-amino-acid polypeptide reads, in one-letter code: E3 ubiquitin-protein ligase TRIM71 (855 aa).

Ala-2 carries the N-acetylalanine modification. An RING-type zinc finger spans residues 12 to 94; that stretch reads CLLCKEMCGS…ALKLRCPVCD (83 aa). Over residues 26 to 42 the composition is skewed to low complexity; it reads SSSSSASSSSSQTSTSS. 2 disordered regions span residues 26–48 and 126–177; these read SSSSSASSSSSQTSTSSAGGGGP and ADEP…SPGS. Residues 135–145 show a composition bias toward gly residues; that stretch reads RAGGGPGGAGG. Residues 147-157 show a composition bias toward basic residues; that stretch reads SNHRHHAHHPA. The B box-type 1; atypical zinc finger occupies 181 to 228; that stretch reads RRPHGCSSCDEGNAASSRCLDCQEHLCDNCVRAHQRVRLTKDHYIERG. Residues 260 to 301 form a B box-type 2 zinc finger; it reads ERLGFCQHHDDEVLHLYCDTCSVPICRECTLGRHGGHSFAYL. Zn(2+)-binding residues include Cys-265, His-268, Cys-288, and His-293. Residues 378-414 are a coiled coil; sequence QVKAKSLYLQVEKLRQNLNKLESTISAVQQVLEEGRA. The stretch at 466–567 is one Filamin repeat; that stretch reads SSGAFAPLTK…IENSPFKVVV (102 aa). NHL repeat units follow at residues 580–623, 627–670, 674–717, 721–764, 768–811, and 815–855; these read VLSF…FKPC, HHKF…FTFE, LLKF…FGPD, LNKY…IHPD, ARFL…FEAN, and LCKF…ILIF.

Belongs to the TRIM/RBCC family. In terms of assembly, interacts (via NHL repeats) with AGO2; the interaction increases in presence of RNA. Interacts with HSP90AA1. Interacts (via NHL repeats) with MOV10, PABPC1, PUM1, PUM2, STAU2, XRN1 and XRN2 in an RNA-dependent manner. Interacts with SHCBP1; leading to enhance its stability. Post-translationally, autoubiquitinated.

It is found in the cytoplasm. The protein localises to the P-body. It catalyses the reaction S-ubiquitinyl-[E2 ubiquitin-conjugating enzyme]-L-cysteine + [acceptor protein]-L-lysine = [E2 ubiquitin-conjugating enzyme]-L-cysteine + N(6)-ubiquitinyl-[acceptor protein]-L-lysine.. It participates in protein modification; protein ubiquitination. In terms of biological role, E3 ubiquitin-protein ligase that cooperates with the microRNAs (miRNAs) machinery and promotes embryonic stem cells proliferation and maintenance. Binds to miRNAs and associates with AGO2, participating in post-transcriptional repression of transcripts such as CDKN1A. In addition, participates in post-transcriptional mRNA repression in a miRNA independent mechanism. Facilitates the G1-S transition to promote rapid embryonic stem cell self-renewal by repressing CDKN1A expression. Required to maintain proliferation and prevent premature differentiation of neural progenitor cells during early neural development: positively regulates FGF signaling by controlling the stability of SHCBP1. Specific regulator of miRNA biogenesis. Binds to miRNA MIR29A hairpin and postranscriptionally modulates MIR29A levels, which indirectly regulates TET proteins expression. The protein is E3 ubiquitin-protein ligase TRIM71 (Trim71) of Rattus norvegicus (Rat).